We begin with the raw amino-acid sequence, 243 residues long: DNA repair protein RecO (243 aa).

It belongs to the RecO family.

Involved in DNA repair and RecF pathway recombination. The chain is DNA repair protein RecO from Serratia proteamaculans (strain 568).